A 486-amino-acid chain; its full sequence is Cardiolipin synthase A (486 aa).

Transmembrane regions (helical) follow at residues 3-23 (TVYT…IAGV) and 38-58 (MAWL…YLAV). 2 consecutive PLD phosphodiesterase domains span residues 219-246 (MDLR…VDPR) and 399-426 (EGGL…DMRS). Active-site residues include His224, Lys226, Asp231, His404, Lys406, and Asp411.

Belongs to the phospholipase D family. Cardiolipin synthase subfamily. ClsA sub-subfamily.

The protein resides in the cell inner membrane. The catalysed reaction is 2 a 1,2-diacyl-sn-glycero-3-phospho-(1'-sn-glycerol) = a cardiolipin + glycerol. Catalyzes the reversible phosphatidyl group transfer from one phosphatidylglycerol molecule to another to form cardiolipin (CL) (diphosphatidylglycerol) and glycerol. The chain is Cardiolipin synthase A from Escherichia coli O7:K1 (strain IAI39 / ExPEC).